A 521-amino-acid chain; its full sequence is Acetyl-CoA hydrolase (521 aa).

276-280 provides a ligand contact to CoA; it reads GIGNI. Residue Glu-301 is the 5-glutamyl coenzyme A thioester intermediate of the active site. Asn-391 and Gly-395 together coordinate CoA.

This sequence belongs to the acetyl-CoA hydrolase/transferase family.

It localises to the cytoplasm. The catalysed reaction is acetyl-CoA + H2O = acetate + CoA + H(+). In terms of biological role, presumably involved in regulating the intracellular acetyl-CoA pool for fatty acid and cholesterol synthesis and fatty acid oxidation. This chain is Acetyl-CoA hydrolase (ach1), found in Schizosaccharomyces pombe (strain 972 / ATCC 24843) (Fission yeast).